A 273-amino-acid chain; its full sequence is N(omega)-hydroxy-L-arginine amidinohydrolase (273 aa).

5 residues coordinate Mn(2+): aspartate 109, histidine 111, aspartate 113, aspartate 198, and aspartate 200.

Belongs to the arginase family. Mn(2+) is required as a cofactor.

The enzyme catalyses N(omega)-hydroxy-L-arginine + H2O = hydroxyurea + L-ornithine. Functionally, involved in the biosynthesis of the antibiotic D-cycloserine (DCS), a cyclic structural analog of D-alanine, used as an antitubercular agent. Catalyzes the hydrolysis of N(omega)-hydroxy-L-arginine (NHA) to yield hydroxyurea (HU) and L-ornithine. The chain is N(omega)-hydroxy-L-arginine amidinohydrolase from Streptomyces lavendulae.